A 521-amino-acid chain; its full sequence is Lysine--tRNA ligase (521 aa).

The 'HIGH' region signature appears at P32 to N40. The short motif at K280–S284 is the 'KMSKS' region element.

It belongs to the class-I aminoacyl-tRNA synthetase family.

It is found in the cytoplasm. It catalyses the reaction tRNA(Lys) + L-lysine + ATP = L-lysyl-tRNA(Lys) + AMP + diphosphate. This is Lysine--tRNA ligase from Borrelia garinii subsp. bavariensis (strain ATCC BAA-2496 / DSM 23469 / PBi) (Borreliella bavariensis).